The chain runs to 225 residues: Enolase-phosphatase E1 (225 aa).

The protein belongs to the HAD-like hydrolase superfamily. MasA/MtnC family. In terms of assembly, monomer. Mg(2+) is required as a cofactor.

The enzyme catalyses 5-methylsulfanyl-2,3-dioxopentyl phosphate + H2O = 1,2-dihydroxy-5-(methylsulfanyl)pent-1-en-3-one + phosphate. It functions in the pathway amino-acid biosynthesis; L-methionine biosynthesis via salvage pathway; L-methionine from S-methyl-5-thio-alpha-D-ribose 1-phosphate: step 3/6. It participates in amino-acid biosynthesis; L-methionine biosynthesis via salvage pathway; L-methionine from S-methyl-5-thio-alpha-D-ribose 1-phosphate: step 4/6. Its function is as follows. Bifunctional enzyme that catalyzes the enolization of 2,3-diketo-5-methylthiopentyl-1-phosphate (DK-MTP-1-P) into the intermediate 2-hydroxy-3-keto-5-methylthiopentenyl-1-phosphate (HK-MTPenyl-1-P), which is then dephosphorylated to form the acireductone 1,2-dihydroxy-3-keto-5-methylthiopentene (DHK-MTPene). The polypeptide is Enolase-phosphatase E1 (Shewanella denitrificans (strain OS217 / ATCC BAA-1090 / DSM 15013)).